A 282-amino-acid polypeptide reads, in one-letter code: HTH-type transcriptional activator RhaR (282 aa).

One can recognise an HTH araC/xylS-type domain in the interval 179-277 (DKLITALAGS…GMTPVQWRHR (99 aa)). 2 consecutive DNA-binding regions (H-T-H motif) follow at residues 196 to 217 (EKFCEQEQCSERALRQQFRTQT) and 244 to 267 (VSEVAMRCGFEDSNYFSVVFNREV).

In terms of assembly, binds DNA as a dimer.

It localises to the cytoplasm. Activates expression of the rhaSR operon in response to L-rhamnose. The protein is HTH-type transcriptional activator RhaR of Enterobacter sp. (strain 638).